A 302-amino-acid polypeptide reads, in one-letter code: Pyridoxal 5'-phosphate synthase subunit PdxS (302 aa).

D-ribose 5-phosphate is bound at residue Asp32. Lys89 functions as the Schiff-base intermediate with D-ribose 5-phosphate in the catalytic mechanism. Gly161 contributes to the D-ribose 5-phosphate binding site. Arg173 is a D-glyceraldehyde 3-phosphate binding site. Residues Gly222 and 243–244 (GS) contribute to the D-ribose 5-phosphate site. A disordered region spans residues 276–302 (ASNPGKGMKGEANADLSEGEKLQTRGV). The span at 293-302 (EGEKLQTRGV) shows a compositional bias: basic and acidic residues.

It belongs to the PdxS/SNZ family. As to quaternary structure, in the presence of PdxT, forms a dodecamer of heterodimers.

It catalyses the reaction aldehydo-D-ribose 5-phosphate + D-glyceraldehyde 3-phosphate + L-glutamine = pyridoxal 5'-phosphate + L-glutamate + phosphate + 3 H2O + H(+). It functions in the pathway cofactor biosynthesis; pyridoxal 5'-phosphate biosynthesis. Its function is as follows. Catalyzes the formation of pyridoxal 5'-phosphate from ribose 5-phosphate (RBP), glyceraldehyde 3-phosphate (G3P) and ammonia. The ammonia is provided by the PdxT subunit. Can also use ribulose 5-phosphate and dihydroxyacetone phosphate as substrates, resulting from enzyme-catalyzed isomerization of RBP and G3P, respectively. This chain is Pyridoxal 5'-phosphate synthase subunit PdxS, found in Haloquadratum walsbyi (strain DSM 16790 / HBSQ001).